A 338-amino-acid polypeptide reads, in one-letter code: Large ribosomal subunit protein uL3 (338 aa).

The interval 1-37 (MPQPSRPRKGSMGFSPRKRAESEVPRIRSWASNDGAP) is disordered.

It belongs to the universal ribosomal protein uL3 family. In terms of assembly, part of the 50S ribosomal subunit. Forms a cluster with proteins L14 and L24e.

Functionally, one of the primary rRNA binding proteins, it binds directly near the 3'-end of the 23S rRNA, where it nucleates assembly of the 50S subunit. The sequence is that of Large ribosomal subunit protein uL3 from Haloquadratum walsbyi (strain DSM 16790 / HBSQ001).